Here is a 144-residue protein sequence, read N- to C-terminus: Probable 4-amino-4-deoxy-L-arabinose-phosphoundecaprenol flippase subunit ArnF (144 aa).

Residues 1–6 are Cytoplasmic-facing; it reads MTHRRA. A helical transmembrane segment spans residues 7 to 24; that stretch reads TLCAMASVALVSAAQLGM. At 25 to 56 the chain is on the periplasmic side; the sequence is RWSMSRLPSPVQWLEMQEHAQLDLSALRVVCA. The helical transmembrane segment at 57–77 threads the bilayer; the sequence is SITAYALSMLFWLLALRVLPL. Residues 78 to 80 are Cytoplasmic-facing; sequence SRA. Residues 81-101 traverse the membrane as a helical segment; sequence YSLLSISYALVYTLAATLPFF. Residues 102–104 are Periplasmic-facing; the sequence is HET. A helical membrane pass occupies residues 105 to 125; it reads FTVSKTVGVSLIVAGVLTINL. Topologically, residues 126–144 are cytoplasmic; sequence RRLPRPSPQDLSHENQRFR.

The protein belongs to the ArnF family. Heterodimer of ArnE and ArnF.

It localises to the cell inner membrane. It functions in the pathway bacterial outer membrane biogenesis; lipopolysaccharide biosynthesis. In terms of biological role, translocates 4-amino-4-deoxy-L-arabinose-phosphoundecaprenol (alpha-L-Ara4N-phosphoundecaprenol) from the cytoplasmic to the periplasmic side of the inner membrane. This Pseudomonas syringae pv. syringae (strain B728a) protein is Probable 4-amino-4-deoxy-L-arabinose-phosphoundecaprenol flippase subunit ArnF.